A 129-amino-acid polypeptide reads, in one-letter code: 3-aminoacrylate deaminase RutC (129 aa).

Belongs to the RutC family.

It catalyses the reaction (Z)-3-aminoacrylate + H2O + H(+) = 3-oxopropanoate + NH4(+). Involved in pyrimidine catabolism. Catalyzes the deamination of 3-aminoacrylate to malonic semialdehyde, a reaction that can also occur spontaneously. RutC may facilitate the reaction and modulate the metabolic fitness, rather than catalyzing essential functions. This is 3-aminoacrylate deaminase RutC from Yersinia enterocolitica serotype O:8 / biotype 1B (strain NCTC 13174 / 8081).